The sequence spans 425 residues: Serine--tRNA ligase (425 aa).

233-235 (TAE) contacts L-serine. 264 to 266 (RRE) provides a ligand contact to ATP. Glu287 contributes to the L-serine binding site. Residue 351–354 (EISS) coordinates ATP. L-serine is bound at residue Ser385.

The protein belongs to the class-II aminoacyl-tRNA synthetase family. Type-1 seryl-tRNA synthetase subfamily. In terms of assembly, homodimer. The tRNA molecule binds across the dimer.

It is found in the cytoplasm. The catalysed reaction is tRNA(Ser) + L-serine + ATP = L-seryl-tRNA(Ser) + AMP + diphosphate + H(+). It catalyses the reaction tRNA(Sec) + L-serine + ATP = L-seryl-tRNA(Sec) + AMP + diphosphate + H(+). Its pathway is aminoacyl-tRNA biosynthesis; selenocysteinyl-tRNA(Sec) biosynthesis; L-seryl-tRNA(Sec) from L-serine and tRNA(Sec): step 1/1. Its function is as follows. Catalyzes the attachment of serine to tRNA(Ser). Is also able to aminoacylate tRNA(Sec) with serine, to form the misacylated tRNA L-seryl-tRNA(Sec), which will be further converted into selenocysteinyl-tRNA(Sec). This Synechococcus sp. (strain CC9902) protein is Serine--tRNA ligase.